A 719-amino-acid chain; its full sequence is Protein lin-15A (719 aa).

4 disordered regions span residues 179–199 (FSHF…EGSQ), 419–464 (YRDH…SISW), 559–626 (LTTA…PTKT), and 684–719 (AKQV…EPIF). A compositionally biased stretch (low complexity) spans 570–579 (STSTDSSSSS). The span at 604 to 617 (LLQNKPTHVESSSP) shows a compositional bias: polar residues. The segment covering 693–719 (EPKHIPPTHMEKKPEELLMDPKPEPIF) has biased composition (basic and acidic residues).

The protein resides in the nucleus. Its function is as follows. Synthetic multivulva (synMuv) class A protein. SynMuv proteins are required to repress the induction of vulval development. Acts redundantly with SynMuv class B protein lin-15B, and lin-35 to negatively regulate vulval development, most likely through antagonization of the Ras-signaling pathway. May also negatively regulate vulval development in association with other SynMuv class B proteins such as dpl-1 and efl-1. Regulates let-23 basal activity. Required for the correct expression and/or stability of lin-56. This Caenorhabditis elegans protein is Protein lin-15A.